The following is a 465-amino-acid chain: MFIDGKWILREDIDVFDPYTLENIEKITALDREETKSAIEVAEKNKEIMKNLSPSKRYSILMKIAEQISLKKDLFAKTISIDVGKPIKQSKIEVDRTLTALKLSAFYAKELRGETINSENGLIFTKKEPLGVVGAITPFNFPLNLITHKIGPAIATGNSVVLHPSSKAPIVAIYLTKIIEHVLKQMDVPRGIFNLATGNGDIVGDEISKNDNINMVSFTGSVEVGESISKNAKMKKVALELGGNNPMIVLKDSDIKLAAKSAVKSKFLNAGQVCISVGQVLVEEEVLETFTKHVIEETKKLILGNPLDTKTDIGPLISPESALRIENLIKKSVNEGGEVLIGGNRQNSLISPAVINIDENNILSKIETFGPVLPILKVKDSEEAVSIANNSKYGLQAGVFTNDINKAMKIADSLEYGGIMINSSPTFRKDNMPFGGVKKSGLGREGIKYTVEEMCETKTIVIHNI.

Residue 220-225 coordinates NAD(+); that stretch reads GSVEVG. Active-site residues include Glu240 and Cys274.

Belongs to the aldehyde dehydrogenase family. Homotetramer.

It catalyses the reaction (S)-lactaldehyde + NAD(+) + H2O = (S)-lactate + NADH + 2 H(+). The protein operates within cofactor biosynthesis; coenzyme F420 biosynthesis. In terms of biological role, involved in F420 biosynthesis through the oxidation of lactaldehyde to lactate. In Methanococcus maripaludis (strain C5 / ATCC BAA-1333), this protein is Lactaldehyde dehydrogenase.